The primary structure comprises 461 residues: tRNA modification GTPase MnmE (461 aa).

(6S)-5-formyl-5,6,7,8-tetrahydrofolate contacts are provided by Arg22, Glu87, and Arg126. A TrmE-type G domain is found at 222-382; that stretch reads GITAVIAGKP…LENKLYEILI (161 aa). Asn232 serves as a coordination point for K(+). GTP is bound by residues 232-237, 251-257, 276-279, and 363-365; these read NVGKSS, TDIPGTT, DTAG, and SAR. Ser236 is a Mg(2+) binding site. Residues Thr251, Ile253, and Thr256 each coordinate K(+). Thr257 lines the Mg(2+) pocket. Lys461 lines the (6S)-5-formyl-5,6,7,8-tetrahydrofolate pocket.

It belongs to the TRAFAC class TrmE-Era-EngA-EngB-Septin-like GTPase superfamily. TrmE GTPase family. In terms of assembly, homodimer. Heterotetramer of two MnmE and two MnmG subunits. The cofactor is K(+).

It localises to the cytoplasm. Functionally, exhibits a very high intrinsic GTPase hydrolysis rate. Involved in the addition of a carboxymethylaminomethyl (cmnm) group at the wobble position (U34) of certain tRNAs, forming tRNA-cmnm(5)s(2)U34. The polypeptide is tRNA modification GTPase MnmE (Carboxydothermus hydrogenoformans (strain ATCC BAA-161 / DSM 6008 / Z-2901)).